The primary structure comprises 292 residues: GTP cyclohydrolase FolE2 (292 aa).

Belongs to the GTP cyclohydrolase IV family.

The enzyme catalyses GTP + H2O = 7,8-dihydroneopterin 3'-triphosphate + formate + H(+). The protein operates within cofactor biosynthesis; 7,8-dihydroneopterin triphosphate biosynthesis; 7,8-dihydroneopterin triphosphate from GTP: step 1/1. Converts GTP to 7,8-dihydroneopterin triphosphate. The protein is GTP cyclohydrolase FolE2 of Macrococcus caseolyticus (strain JCSC5402) (Macrococcoides caseolyticum).